The sequence spans 345 residues: UDP-N-acetylenolpyruvoylglucosamine reductase (345 aa).

The region spanning 16-186 (LPAYASNVIS…VSVGIKLMKS (171 aa)) is the FAD-binding PCMH-type domain. Residue R162 is part of the active site. S232 serves as the catalytic Proton donor. E328 is an active-site residue.

It belongs to the MurB family. FAD serves as cofactor.

The protein resides in the cytoplasm. It carries out the reaction UDP-N-acetyl-alpha-D-muramate + NADP(+) = UDP-N-acetyl-3-O-(1-carboxyvinyl)-alpha-D-glucosamine + NADPH + H(+). The protein operates within cell wall biogenesis; peptidoglycan biosynthesis. Functionally, cell wall formation. The sequence is that of UDP-N-acetylenolpyruvoylglucosamine reductase from Yersinia pestis.